We begin with the raw amino-acid sequence, 299 residues long: Delta-9 desaturase-like 1 protein (299 aa).

2 helical membrane-spanning segments follow: residues isoleucine 31–phenylalanine 51 and tryptophan 55–serine 75. A Histidine box-1 motif is present at residues histidine 77–histidine 82. The Histidine box-2 motif lies at histidine 114–histidine 118. A run of 2 helical transmembrane segments spans residues isoleucine 174 to leucine 194 and valine 198 to isoleucine 218. The Histidine box-3 motif lies at histidine 246 to histidine 250. The chain crosses the membrane as a helical span at residues tryptophan 262–threonine 282.

This sequence belongs to the fatty acid desaturase type 1 family. It depends on Fe cation as a cofactor.

The protein resides in the endoplasmic reticulum membrane. It participates in lipid metabolism; polyunsaturated fatty acid biosynthesis. This is Delta-9 desaturase-like 1 protein from Arabidopsis thaliana (Mouse-ear cress).